The chain runs to 135 residues: Large ribosomal subunit protein uL18 (135 aa).

The disordered stretch occupies residues 1–23; that stretch reads MAQTQADTAARKPVGQSVSATRR.

This sequence belongs to the universal ribosomal protein uL18 family. As to quaternary structure, part of the 50S ribosomal subunit; part of the 5S rRNA/L5/L18/L25 subcomplex. Contacts the 5S and 23S rRNAs.

In terms of biological role, this is one of the proteins that bind and probably mediate the attachment of the 5S RNA into the large ribosomal subunit, where it forms part of the central protuberance. This Mycobacterium marinum (strain ATCC BAA-535 / M) protein is Large ribosomal subunit protein uL18.